We begin with the raw amino-acid sequence, 288 residues long: Diaminopimelate epimerase (288 aa).

Residues N13, Q46, and N66 each contribute to the substrate site. C75 serves as the catalytic Proton donor. Residues 76–77 (GN), N166, N199, and 217–218 (ER) each bind substrate. C226 functions as the Proton acceptor in the catalytic mechanism. Residue 227–228 (GT) coordinates substrate.

The protein belongs to the diaminopimelate epimerase family. As to quaternary structure, homodimer.

It localises to the cytoplasm. The catalysed reaction is (2S,6S)-2,6-diaminopimelate = meso-2,6-diaminopimelate. Its pathway is amino-acid biosynthesis; L-lysine biosynthesis via DAP pathway; DL-2,6-diaminopimelate from LL-2,6-diaminopimelate: step 1/1. Functionally, catalyzes the stereoinversion of LL-2,6-diaminopimelate (L,L-DAP) to meso-diaminopimelate (meso-DAP), a precursor of L-lysine and an essential component of the bacterial peptidoglycan. The polypeptide is Diaminopimelate epimerase (Cupriavidus pinatubonensis (strain JMP 134 / LMG 1197) (Cupriavidus necator (strain JMP 134))).